The primary structure comprises 109 residues: uncharacterized protein (109 aa).

This is an uncharacterized protein from Enterobacteria phage T4 (Bacteriophage T4).